The primary structure comprises 441 residues: Capsid vertex component 1 (441 aa).

Belongs to the herpesviridae CVC1 protein family. In terms of assembly, interacts (via C-terminus) with capsid vertex component 2/CVC2.

The protein resides in the virion. It is found in the host nucleus. Its function is as follows. Capsid vertex-specific component that plays a role during viral DNA encapsidation, assuring correct genome cleavage and presumably stabilizing capsids that contain full-length viral genomes. In Saimiriine herpesvirus 2 (strain 11) (SaHV-2), this protein is Capsid vertex component 1.